The sequence spans 72 residues: Delta-actitoxin-Avd2b 3 (72 aa).

A signal peptide spans 1 to 21 (MMSRLLVFLMLGAAFMLVVSA). Residues 22–42 (NDAYGDEPAFKDLNQGDESLG) constitute a propeptide that is removed on maturation. 3 disulfides stabilise this stretch: cysteine 47-cysteine 62, cysteine 48-cysteine 56, and cysteine 50-cysteine 67.

It belongs to the sea anemone short toxin (type III) family.

It localises to the secreted. The protein localises to the nematocyst. Voltage-gated sodium channel (Nav) inhibitor. 1 uM completely inhibits insect voltage-gated sodium channel inactivation (DmNav1 from D.melanogaster). The protein is Delta-actitoxin-Avd2b 3 of Anemonia viridis (Snakelocks anemone).